The following is a 275-amino-acid chain: Methylesterase 10 (275 aa).

Serine 96 (acyl-ester intermediate) is an active-site residue. Active-site charge relay system residues include aspartate 225 and histidine 253.

Belongs to the AB hydrolase superfamily. Methylesterase family.

The catalysed reaction is methyl (-)-jasmonate + H2O = jasmonate + methanol + H(+). It participates in plant hormone biosynthesis. The protein operates within lipid metabolism; oxylipin biosynthesis. Functionally, methylesterase shown to have methyl jasmonate (MeJA) esterase activity in vitro. This chain is Methylesterase 10, found in Arabidopsis thaliana (Mouse-ear cress).